The sequence spans 762 residues: Anhydrosialidase (762 aa).

An N-terminal signal peptide occupies residues 1-27; that stretch reads MGRIGKKAMAIALVSAVMVTPLNVCAT. Residue R293 coordinates substrate. D318 acts as the Proton acceptor in catalysis. BNR repeat units follow at residues 328-339, 511-522, and 571-582; these read AKSTDGGNTWSE, RYSDDEGASWSD, and MYSDDHGDNWTY. The active site involves E595. R611 provides a ligand contact to substrate. A BNR 4 repeat occupies 620–631; it reads VTSIDGGETWSD. R673 is a substrate binding site. Y713 serves as the catalytic Nucleophile.

Belongs to the glycosyl hydrolase 33 family.

The protein localises to the secreted. Its subcellular location is the extracellular space. The catalysed reaction is Elimination of alpha-sialyl groups in N-acetylneuraminic acid glycosides, releasing 2,7-anhydro-alpha-N-acetylneuraminate.. The chain is Anhydrosialidase from Macrobdella decora (North American leech).